A 239-amino-acid polypeptide reads, in one-letter code: Glutathione S-transferase verG (239 aa).

Residues 18 to 101 (KPLIFVMEGR…YLSNKYDAKR (84 aa)) enclose the GST N-terminal domain. The region spanning 107–237 (NAAENLEICN…ELDSRKEIAI (131 aa)) is the GST C-terminal domain.

This sequence belongs to the GST superfamily.

It catalyses the reaction RX + glutathione = an S-substituted glutathione + a halide anion + H(+). It functions in the pathway mycotoxin biosynthesis. Functionally, glutathione S-transferase; part of the gene cluster that mediates the biosynthesis of 11'-deoxyverticillin A, one of the dimeric epipolythiodioxopiperazines (ETPs) from the verticillin family that act as mycotoxins. 11'-deoxyverticillin A is required for normal conidiation. The nonribosomal peptide synthetase verP is speculated to be responsible for condensation of amino acids to form the carbon skeleton of verticillin, whereas the cluster-specific tailoring enzymes are involved in further modifications leading to the production of 11'-deoxyverticillin A. In Clonostachys rogersoniana, this protein is Glutathione S-transferase verG.